Consider the following 660-residue polypeptide: UvrABC system protein B (660 aa).

The region spanning N27–R414 is the Helicase ATP-binding domain. G40–T47 is a binding site for ATP. The Beta-hairpin signature appears at Y93 to I116. The 163-residue stretch at Q431 to I593 folds into the Helicase C-terminal domain. The segment at N603 to E622 is disordered. Positions E624–E659 constitute a UVR domain.

Belongs to the UvrB family. In terms of assembly, forms a heterotetramer with UvrA during the search for lesions. Interacts with UvrC in an incision complex.

It localises to the cytoplasm. Its function is as follows. The UvrABC repair system catalyzes the recognition and processing of DNA lesions. A damage recognition complex composed of 2 UvrA and 2 UvrB subunits scans DNA for abnormalities. Upon binding of the UvrA(2)B(2) complex to a putative damaged site, the DNA wraps around one UvrB monomer. DNA wrap is dependent on ATP binding by UvrB and probably causes local melting of the DNA helix, facilitating insertion of UvrB beta-hairpin between the DNA strands. Then UvrB probes one DNA strand for the presence of a lesion. If a lesion is found the UvrA subunits dissociate and the UvrB-DNA preincision complex is formed. This complex is subsequently bound by UvrC and the second UvrB is released. If no lesion is found, the DNA wraps around the other UvrB subunit that will check the other stand for damage. The sequence is that of UvrABC system protein B from Staphylococcus saprophyticus subsp. saprophyticus (strain ATCC 15305 / DSM 20229 / NCIMB 8711 / NCTC 7292 / S-41).